Here is a 454-residue protein sequence, read N- to C-terminus: uncharacterized protein (454 aa).

125-132 is a binding site for ATP; sequence GDVGCGKT.

Belongs to the AFG1 ATPase family.

This is an uncharacterized protein from Schizosaccharomyces pombe (strain 972 / ATCC 24843) (Fission yeast).